A 643-amino-acid chain; its full sequence is Extracellular metalloproteinase 4 (643 aa).

The signal sequence occupies residues 1-18; the sequence is MHGLLLAGLLALPLNVLA. Residues 19 to 254 constitute a propeptide that is removed on maturation; the sequence is HPTESHSSGI…VHSVVDYVSA (236 aa). Basic and acidic residues predominate over residues 47–57; sequence TKSDAVPKQDD. The disordered stretch occupies residues 47 to 71; it reads TKSDAVPKQDDESFTTSSTGDDNVS. Positions 60-71 are enriched in polar residues; the sequence is FTTSSTGDDNVS. 2 N-linked (GlcNAc...) asparagine glycosylation sites follow: N271 and N420. H437 provides a ligand contact to Zn(2+). E438 is an active-site residue. Zn(2+) is bound at residue H441. N-linked (GlcNAc...) asparagine glycans are attached at residues N510 and N553.

It belongs to the peptidase M36 family. Zn(2+) is required as a cofactor.

It is found in the secreted. Its function is as follows. Secreted metalloproteinase probably acting as a virulence factor. The sequence is that of Extracellular metalloproteinase 4 (MEP4) from Arthroderma benhamiae (Trichophyton mentagrophytes).